The primary structure comprises 132 residues: Small ribosomal subunit protein uS8 (132 aa).

It belongs to the universal ribosomal protein uS8 family. In terms of assembly, part of the 30S ribosomal subunit. Contacts proteins S5 and S12.

Its function is as follows. One of the primary rRNA binding proteins, it binds directly to 16S rRNA central domain where it helps coordinate assembly of the platform of the 30S subunit. This is Small ribosomal subunit protein uS8 from Clostridium acetobutylicum (strain ATCC 824 / DSM 792 / JCM 1419 / IAM 19013 / LMG 5710 / NBRC 13948 / NRRL B-527 / VKM B-1787 / 2291 / W).